The following is a 341-amino-acid chain: Anthranilate phosphoribosyltransferase (341 aa).

Residues G79, 82-83, T87, 89-92, 107-115, and S119 contribute to the 5-phospho-alpha-D-ribose 1-diphosphate site; these read GD, NIST, and KHGNRAVSS. G79 lines the anthranilate pocket. Position 91 (S91) interacts with Mg(2+). Anthranilate is bound at residue N110. Anthranilate is bound at residue R165. Mg(2+) is bound by residues D224 and E225.

It belongs to the anthranilate phosphoribosyltransferase family. As to quaternary structure, homodimer. The cofactor is Mg(2+).

It catalyses the reaction N-(5-phospho-beta-D-ribosyl)anthranilate + diphosphate = 5-phospho-alpha-D-ribose 1-diphosphate + anthranilate. It participates in amino-acid biosynthesis; L-tryptophan biosynthesis; L-tryptophan from chorismate: step 2/5. Its function is as follows. Catalyzes the transfer of the phosphoribosyl group of 5-phosphorylribose-1-pyrophosphate (PRPP) to anthranilate to yield N-(5'-phosphoribosyl)-anthranilate (PRA). The protein is Anthranilate phosphoribosyltransferase of Bacillus thuringiensis subsp. konkukian (strain 97-27).